Consider the following 467-residue polypeptide: Neurexin-1-beta (467 aa).

The first 45 residues, 1 to 45 (MYQRMLRCGAELGSPGGGGGGAGGRLALLWIVPLTLSGLLGVAWG), serve as a signal peptide directing secretion. Topologically, residues 46-391 (ASSLGAHHIH…EVIRESSSTT (346 aa)) are extracellular. The Laminin G-like domain occupies 86-284 (YIFSKGGGQI…DANIAIVGNV (199 aa)). Asp-136 and Val-153 together coordinate Ca(2+). A glycan (N-linked (GlcNAc...) asparagine) is linked at Asn-183. Residues 200–229 (GNNDNERLAIARQRIPYRLGRVVDEWLLDK) are essential for interaction with CBLN1; modulates interaction affinity with NLGN1, NLGN2 and NLGN3; prevents interaction with DAG1/alpha-dystroglycan; modulates interaction with alpha-latrotoxin. Residues Ile-235 and Asn-237 each coordinate Ca(2+). Residues 318–380 (LATSTARRGN…AGGREPYPGS (63 aa)) are disordered. Residues 324–339 (RRGNSPTKEPVSQTTD) show a composition bias toward polar residues. Ser-345 carries O-linked (Xyl...) (heparan sulfate) serine glycosylation. Residues 392–412 (GMVVGIVAAAALCILILLYAM) form a helical membrane-spanning segment. Residues 413-467 (YKYRNRDEGSYHVDESRNYISNSAQSNGAVVKEKQPSSAKSANKNKKNKDKEYYV) are Cytoplasmic-facing. The tract at residues 434–467 (NSAQSNGAVVKEKQPSSAKSANKNKKNKDKEYYV) is disordered. 3 positions are modified to phosphoserine: Ser-449, Ser-450, and Ser-453.

It belongs to the neurexin family. As to quaternary structure, the cytoplasmic C-terminal region binds to CASK. Binds NLGN1, NLGN2 and NLGN3, DAG1 (alpha-dystroglycan) and alpha-latrotoxin. Binding to neuroligins is calcium-dependent, and the binding preference ranks as follow: NLGN1 &gt; NLGN4 &gt;&gt; NLGN3 &gt; NLGN2. Interacts with CBLN2 and more weakly with CBLN4. Interacts with CBLN1; interaction is CBLN1 hexamer form-dependent; CBLN1-binding is calcium-independent; isoform 1b does not interact with CBLN1. Interacts with CLSTN3. O-glycosylated; contains heparan sulfate. Heparan sulfate attachment is required for synapse development by mediating interactions with neuroligins.

It localises to the presynaptic cell membrane. In terms of biological role, neuronal cell surface protein involved in cell recognition and cell adhesion by forming intracellular junctions through binding to neuroligins. Plays a role in formation of synaptic junctions. Functions as part of a trans-synaptic complex by binding to cerebellins and postsynaptic GRID1. This interaction helps regulate the activity of NMDA and AMPA receptors at hippocampal synapses without affecting synapse formation. NRXN1B-CBLN2-GRID1 complex transduce presynaptic signals into postsynaptic NMDAR response. This Bos taurus (Bovine) protein is Neurexin-1-beta.